Reading from the N-terminus, the 487-residue chain is uncharacterized protein (487 aa).

The N-terminal stretch at 1–31 is a signal peptide; the sequence is MRFHRQGISAIIGVLLIVLLGFCWKLSGSYG. Residues asparagine 40, asparagine 68, asparagine 150, asparagine 220, asparagine 304, asparagine 367, asparagine 442, and asparagine 448 are each glycosylated (N-linked (GlcNAc...) asparagine). Positions 141-176 are disordered; sequence LERRHGRFGNGTNGDHPKGPPPPPPPPDEKGRGSQK.

In terms of processing, N-glycosylated.

This is an uncharacterized protein from Saccharomyces cerevisiae (strain ATCC 204508 / S288c) (Baker's yeast).